Consider the following 363-residue polypeptide: UDP-N-acetylglucosamine--N-acetylmuramyl-(pentapeptide) pyrophosphoryl-undecaprenol N-acetylglucosamine transferase (363 aa).

UDP-N-acetyl-alpha-D-glucosamine-binding positions include 10–12, Asn-124, Ser-195, Ile-250, and Gln-295; that span reads TGG.

The protein belongs to the glycosyltransferase 28 family. MurG subfamily.

It localises to the cell membrane. It carries out the reaction di-trans,octa-cis-undecaprenyl diphospho-N-acetyl-alpha-D-muramoyl-L-alanyl-D-glutamyl-meso-2,6-diaminopimeloyl-D-alanyl-D-alanine + UDP-N-acetyl-alpha-D-glucosamine = di-trans,octa-cis-undecaprenyl diphospho-[N-acetyl-alpha-D-glucosaminyl-(1-&gt;4)]-N-acetyl-alpha-D-muramoyl-L-alanyl-D-glutamyl-meso-2,6-diaminopimeloyl-D-alanyl-D-alanine + UDP + H(+). The protein operates within cell wall biogenesis; peptidoglycan biosynthesis. Its function is as follows. Cell wall formation. Catalyzes the transfer of a GlcNAc subunit on undecaprenyl-pyrophosphoryl-MurNAc-pentapeptide (lipid intermediate I) to form undecaprenyl-pyrophosphoryl-MurNAc-(pentapeptide)GlcNAc (lipid intermediate II). The protein is UDP-N-acetylglucosamine--N-acetylmuramyl-(pentapeptide) pyrophosphoryl-undecaprenol N-acetylglucosamine transferase of Listeria monocytogenes serovar 1/2a (strain ATCC BAA-679 / EGD-e).